The chain runs to 335 residues: Proline-rich protein 1 (335 aa).

The signal sequence occupies residues 1 to 22; the sequence is MAITRASFAICILLSLATIATA. A run of 39 repeats spans residues 30 to 34, 35 to 39, 40 to 43, 44 to 48, 49 to 53, 54 to 57, 58 to 62, 63 to 67, 68 to 71, 72 to 76, 77 to 81, 82 to 86, 87 to 91, 92 to 96, 97 to 101, 102 to 106, 107 to 110, 111 to 115, 116 to 120, 121 to 125, 126 to 130, 131 to 135, 136 to 139, 140 to 144, 145 to 148, 149 to 153, 154 to 158, 159 to 163, 164 to 167, 168 to 172, 173 to 177, 178 to 182, 184 to 189, 190 to 194, 195 to 200, 201 to 207, 208 to 212, 284 to 288, and 319 to 323. The tract at residues 30–323 is 39 X 5 AA approximate repeats; it reads PPVYTSPVNK…LFNVGPFYFT (294 aa).

It belongs to the plant proline-rich protein superfamily. ENOD12 family. As to expression, exclusively expressed in roots, especially in root hairs.

The protein resides in the secreted. The protein localises to the cell wall. Functionally, may contribute to cell wall structure in root hairs. The polypeptide is Proline-rich protein 1 (PRP1) (Arabidopsis thaliana (Mouse-ear cress)).